The following is a 297-amino-acid chain: Homoserine kinase (297 aa).

Position 82–92 (82–92 (PLTRGLGSSAS)) interacts with ATP.

It belongs to the GHMP kinase family. Homoserine kinase subfamily.

It localises to the cytoplasm. The catalysed reaction is L-homoserine + ATP = O-phospho-L-homoserine + ADP + H(+). It functions in the pathway amino-acid biosynthesis; L-threonine biosynthesis; L-threonine from L-aspartate: step 4/5. Catalyzes the ATP-dependent phosphorylation of L-homoserine to L-homoserine phosphate. The chain is Homoserine kinase from Bacillus cereus (strain ATCC 14579 / DSM 31 / CCUG 7414 / JCM 2152 / NBRC 15305 / NCIMB 9373 / NCTC 2599 / NRRL B-3711).